The chain runs to 423 residues: Sorting nexin-4 (423 aa).

The segment covering 1–21 (MTDKGKNDLTSKAKDKARGNP) has biased composition (basic and acidic residues). Positions 1 to 25 (MTDKGKNDLTSKAKDKARGNPEKPP) are disordered. The PX domain maps to 29-157 (EIIVSDPQKR…TFLVSKDWES (129 aa)). A 1,2-diacyl-sn-glycero-3-phospho-(1D-myo-inositol-3-phosphate) is bound by residues Arg78, Ser80, Lys104, and Arg123. 2 coiled-coil regions span residues 217–252 (KKND…AKLK) and 346–381 (SRRE…ECLK).

This sequence belongs to the sorting nexin family. Forms a complex with ATG20 and ATG17. Binds also to SNC1 and SNX41.

It is found in the cytoplasm. It localises to the cytosol. The protein resides in the preautophagosomal structure membrane. The protein localises to the endosome membrane. Functionally, sorting nexin, involved in the separation or division of vacuoles throughout the entire life cycle of the cells. Involved in retrieval of late-Golgi SNAREs from post-Golgi endosomes to the trans-Golgi network, for cytoplasm to vacuole transport (Cvt), and autophagy of large cargos including mitophagy, pexophagy and glycophagy. Involved in proper sorting of the v-SNARE protein SNC1. The chain is Sorting nexin-4 from Saccharomyces cerevisiae (strain ATCC 204508 / S288c) (Baker's yeast).